The primary structure comprises 394 residues: GDSL esterase/lipase At1g31550 (394 aa).

A signal peptide spans 1–27 (MASLDSHVLMKLGSLFLSTLFVSIVSS). S43 serves as the catalytic Nucleophile. 3 N-linked (GlcNAc...) asparagine glycosylation sites follow: N138, N290, and N322. Residues D345 and H348 contribute to the active site.

This sequence belongs to the 'GDSL' lipolytic enzyme family.

Its subcellular location is the secreted. The protein is GDSL esterase/lipase At1g31550 of Arabidopsis thaliana (Mouse-ear cress).